The chain runs to 138 residues: ATP synthase epsilon chain, chloroplastic (138 aa).

This sequence belongs to the ATPase epsilon chain family. As to quaternary structure, F-type ATPases have 2 components, CF(1) - the catalytic core - and CF(0) - the membrane proton channel. CF(1) has five subunits: alpha(3), beta(3), gamma(1), delta(1), epsilon(1). CF(0) has three main subunits: a, b and c.

It is found in the plastid. The protein localises to the chloroplast thylakoid membrane. Functionally, produces ATP from ADP in the presence of a proton gradient across the membrane. This is ATP synthase epsilon chain, chloroplastic from Huperzia lucidula (Shining clubmoss).